The following is a 383-amino-acid chain: ATP phosphoribosyltransferase regulatory subunit (383 aa).

The protein belongs to the class-II aminoacyl-tRNA synthetase family. HisZ subfamily. Heteromultimer composed of HisG and HisZ subunits.

The protein localises to the cytoplasm. It functions in the pathway amino-acid biosynthesis; L-histidine biosynthesis; L-histidine from 5-phospho-alpha-D-ribose 1-diphosphate: step 1/9. Its function is as follows. Required for the first step of histidine biosynthesis. May allow the feedback regulation of ATP phosphoribosyltransferase activity by histidine. The protein is ATP phosphoribosyltransferase regulatory subunit of Neisseria gonorrhoeae (strain NCCP11945).